Reading from the N-terminus, the 357-residue chain is Protein-glutamate methylesterase/protein-glutamine glutaminase (357 aa).

The 118-residue stretch at R3–S120 folds into the Response regulatory domain. D54 carries the 4-aspartylphosphate modification. Positions E165–K357 constitute a CheB-type methylesterase domain. Residues S177, H204, and D300 contribute to the active site.

It belongs to the CheB family. Phosphorylated by CheA. Phosphorylation of the N-terminal regulatory domain activates the methylesterase activity.

It is found in the cytoplasm. The catalysed reaction is [protein]-L-glutamate 5-O-methyl ester + H2O = L-glutamyl-[protein] + methanol + H(+). It catalyses the reaction L-glutaminyl-[protein] + H2O = L-glutamyl-[protein] + NH4(+). Involved in chemotaxis. Part of a chemotaxis signal transduction system that modulates chemotaxis in response to various stimuli. Catalyzes the demethylation of specific methylglutamate residues introduced into the chemoreceptors (methyl-accepting chemotaxis proteins or MCP) by CheR. Also mediates the irreversible deamidation of specific glutamine residues to glutamic acid. This chain is Protein-glutamate methylesterase/protein-glutamine glutaminase, found in Lawsonia intracellularis (strain PHE/MN1-00).